The sequence spans 287 residues: MQELNQIFNTIKDIAKEISEVIKYADLGYTTHENATGDTQLKLDVKSDEIITAKFKQLSCVKALISEEKEDELEINKNAKFIIAYDPLDGSSLVDVNFAVGSIFGIYEDEVKPENLIAAAYSIYGPRLELVIAEKKGALPKFYRLGKDGEFKFVKELELKEKGKLNATGATQKGWSQTHRNFINELFNEGYRLRYSGAMVSDLHQILLKGGGLFSYPATSDHPNGKLRVVFEVLPFAFIYENAKGATTDGKNQTLFDIKIEKIHQTTPCFFGSRDEISLLHKFYEQK.

Mg(2+) is bound by residues Glu-67, Asp-86, Leu-88, and Asp-89. Substrate-binding positions include 89–92, Tyr-195, and Lys-226; that span reads DGSS. Glu-232 contacts Mg(2+).

It belongs to the FBPase class 1 family. As to quaternary structure, homotetramer. Requires Mg(2+) as cofactor.

The protein resides in the cytoplasm. The catalysed reaction is beta-D-fructose 1,6-bisphosphate + H2O = beta-D-fructose 6-phosphate + phosphate. It functions in the pathway carbohydrate biosynthesis; gluconeogenesis. The chain is Fructose-1,6-bisphosphatase class 1 from Campylobacter concisus (strain 13826).